Consider the following 198-residue polypeptide: GTP-binding protein Di-Ras1 (198 aa).

GTP contacts are provided by residues Gly17 to Ser22, Arg33 to Thr39, Asp61 to Ser65, Asn121 to Glu125, Ala151, and Ala151 to Lys152. Positions Tyr36 to Tyr44 match the Effector region motif. At Cys195 the chain carries Cysteine methyl ester. A lipid anchor (S-geranylgeranyl cysteine) is attached at Cys195. Positions Ala196 to Met198 are cleaved as a propeptide — removed in mature form.

This sequence belongs to the small GTPase superfamily. Di-Ras family.

Its subcellular location is the cell membrane. In terms of biological role, displays low GTPase activity and exists predominantly in the GTP-bound form. In Mus musculus (Mouse), this protein is GTP-binding protein Di-Ras1 (Diras1).